The following is a 404-amino-acid chain: Glucose-1-phosphate adenylyltransferase (404 aa).

Alpha-D-glucose 1-phosphate contacts are provided by residues Tyr-99, Gly-164, 179–180 (EK), and Ser-197.

Belongs to the bacterial/plant glucose-1-phosphate adenylyltransferase family. As to quaternary structure, homotetramer.

It catalyses the reaction alpha-D-glucose 1-phosphate + ATP + H(+) = ADP-alpha-D-glucose + diphosphate. It functions in the pathway glycan biosynthesis; glycogen biosynthesis. Its function is as follows. Involved in the biosynthesis of ADP-glucose, a building block required for the elongation reactions to produce glycogen. Catalyzes the reaction between ATP and alpha-D-glucose 1-phosphate (G1P) to produce pyrophosphate and ADP-Glc. This Rhodococcus erythropolis (strain PR4 / NBRC 100887) protein is Glucose-1-phosphate adenylyltransferase.